A 640-amino-acid polypeptide reads, in one-letter code: Chaperone protein DnaK (640 aa).

Position 199 is a phosphothreonine; by autocatalysis (threonine 199). Positions 603 to 640 are disordered; sequence YAAGETESSAAEPGEPQEKTVDAEVVDAEFEEVKDDKK. Acidic residues predominate over residues 626 to 640; sequence EVVDAEFEEVKDDKK.

Belongs to the heat shock protein 70 family.

Functionally, acts as a chaperone. The polypeptide is Chaperone protein DnaK (Methylobacillus flagellatus (strain ATCC 51484 / DSM 6875 / VKM B-1610 / KT)).